A 616-amino-acid chain; its full sequence is Protein translocase subunit SecD (616 aa).

6 helical membrane passes run 11 to 31 (LMVI…IYGE), 453 to 473 (QGIN…LFYY), 475 to 495 (MFGV…VGLM), 497 to 517 (ILPG…TLGM), 547 to 569 (YNGA…IILY), and 585 to 605 (LGVA…VNAL).

This sequence belongs to the SecD/SecF family. SecD subfamily. As to quaternary structure, forms a complex with SecF. Part of the essential Sec protein translocation apparatus which comprises SecA, SecYEG and auxiliary proteins SecDF-YajC and YidC.

The protein resides in the cell inner membrane. Functionally, part of the Sec protein translocase complex. Interacts with the SecYEG preprotein conducting channel. SecDF uses the proton motive force (PMF) to complete protein translocation after the ATP-dependent function of SecA. The chain is Protein translocase subunit SecD from Haemophilus influenzae (strain ATCC 51907 / DSM 11121 / KW20 / Rd).